Consider the following 228-residue polypeptide: Lipoprotein-releasing system ATP-binding protein LolD (228 aa).

Residues Leu-9 to Arg-228 form the ABC transporter domain. An ATP-binding site is contributed by Gly-44–Ser-51.

It belongs to the ABC transporter superfamily. Lipoprotein translocase (TC 3.A.1.125) family. The complex is composed of two ATP-binding proteins (LolD) and two transmembrane proteins (LolC and LolE).

The protein resides in the cell inner membrane. Its function is as follows. Part of the ABC transporter complex LolCDE involved in the translocation of mature outer membrane-directed lipoproteins, from the inner membrane to the periplasmic chaperone, LolA. Responsible for the formation of the LolA-lipoprotein complex in an ATP-dependent manner. This Protochlamydia amoebophila (strain UWE25) protein is Lipoprotein-releasing system ATP-binding protein LolD.